The primary structure comprises 447 residues: Serine/threonine-protein phosphatase 2A 55 kDa regulatory subunit B delta isoform (447 aa).

WD repeat units lie at residues 26 to 65, 91 to 132, 175 to 213, 224 to 264, 283 to 321, 338 to 379, and 414 to 447; these read AEAD…KSRP, EIEE…KRVE, AHTY…RSFN, ELTE…LCDR, EIIS…RPVE, ENDC…DITL, and DFNK…DKVN.

Belongs to the phosphatase 2A regulatory subunit B family. As to quaternary structure, PP2A consists of a common heterodimeric core enzyme, composed of a 36 kDa catalytic subunit (subunit C) and a 65 kDa constant regulatory subunit (PR65 or subunit A), that associates with a variety of regulatory subunits. Proteins that associate with the core dimer include three families of regulatory subunits B (the R2/B/PR55/B55, R3/B''/PR72/PR130/PR59 and R5/B'/B56 families), the 48 kDa variable regulatory subunit, viral proteins, and cell signaling molecules. Interacts with ensa (when phosphorylated at 'Ser-67') and arpp19 (when phosphorylated at 'Ser-67'), leading to inhibit PP2A activity.

Its subcellular location is the cytoplasm. Its function is as follows. Substrate-recognition subunit of protein phosphatase 2A (PP2A) that plays a key role in cell cycle by controlling mitosis entry and exit. The activity of PP2A complexes containing ppp2r2d (PR55-delta) fluctuate during the cell cycle: the activity is high in interphase and low in mitosis. During mitosis, activity of PP2A is inhibited via interaction with phosphorylated ensa and arpp19 inhibitors. PP2A complexes containing ppp2r2d (PR55-delta) also regulate the activity of TGF-beta/Activin/Nodal signaling by restricting receptor activity. Within the PP2A complexes, the B regulatory subunits modulate substrate selectivity and catalytic activity, and may also direct the localization of the catalytic enzyme to a particular subcellular compartment. The protein is Serine/threonine-protein phosphatase 2A 55 kDa regulatory subunit B delta isoform (ppp2r2d) of Xenopus laevis (African clawed frog).